The chain runs to 346 residues: Phosphate-binding protein PstS (346 aa).

Positions 1 to 25 (MKVMRTTVATVVAATLSMSAFSVFA) are cleaved as a signal peptide. Residues 34 to 36 (ATF), Ser63, Asp81, and 164 to 166 (SGT) contribute to the phosphate site.

It belongs to the PstS family. In terms of assembly, the complex is composed of two ATP-binding proteins (PstB), two transmembrane proteins (PstC and PstA) and a solute-binding protein (PstS).

It localises to the periplasm. Its function is as follows. Part of the ABC transporter complex PstSACB involved in phosphate import. In Escherichia coli (strain K12), this protein is Phosphate-binding protein PstS (pstS).